The sequence spans 67 residues: Large ribosomal subunit protein uL29 (67 aa).

This sequence belongs to the universal ribosomal protein uL29 family.

The chain is Large ribosomal subunit protein uL29 from Zymomonas mobilis subsp. mobilis (strain ATCC 31821 / ZM4 / CP4).